The following is a 360-amino-acid chain: Phospho-N-acetylmuramoyl-pentapeptide-transferase (360 aa).

A run of 10 helical transmembrane segments spans residues 25–45 (RGILGVLTALSLALWLGPWMI), 73–93 (TMGGALILSAIAVSTLLWADL), 97–117 (YVWVVLIVTLAFGAIGWVDDY), 134–154 (YFWQSVFGLAAAVFLYKTAPT), 168–188 (VTIPLGVGFVVLTYFVIVGSS), 199–219 (GLAIMPTVMVGGALGIFCYLS), 236–256 (SGELIVFCGALIGAGLGFLWF), 263–283 (VFMGDVGALALGAALGTIAVI), 288–308 (IVLFIMGGIFVVETLSVVIQV), and 338–358 (VIVRFWIITVILVLIGLATLK).

Belongs to the glycosyltransferase 4 family. MraY subfamily. Mg(2+) serves as cofactor.

Its subcellular location is the cell inner membrane. The enzyme catalyses UDP-N-acetyl-alpha-D-muramoyl-L-alanyl-gamma-D-glutamyl-meso-2,6-diaminopimeloyl-D-alanyl-D-alanine + di-trans,octa-cis-undecaprenyl phosphate = di-trans,octa-cis-undecaprenyl diphospho-N-acetyl-alpha-D-muramoyl-L-alanyl-D-glutamyl-meso-2,6-diaminopimeloyl-D-alanyl-D-alanine + UMP. Its pathway is cell wall biogenesis; peptidoglycan biosynthesis. Its function is as follows. Catalyzes the initial step of the lipid cycle reactions in the biosynthesis of the cell wall peptidoglycan: transfers peptidoglycan precursor phospho-MurNAc-pentapeptide from UDP-MurNAc-pentapeptide onto the lipid carrier undecaprenyl phosphate, yielding undecaprenyl-pyrophosphoryl-MurNAc-pentapeptide, known as lipid I. This is Phospho-N-acetylmuramoyl-pentapeptide-transferase from Pseudomonas putida (strain ATCC 700007 / DSM 6899 / JCM 31910 / BCRC 17059 / LMG 24140 / F1).